The following is a 432-amino-acid chain: DEAD-box ATP-dependent RNA helicase 56 (432 aa).

The stretch at 1–28 (MAEAEVKDNEVYEEDLVDYEEEVENGTD) forms a coiled coil. The Q motif motif lies at 51 to 79 (SGFRDFLLKPELLRAIQDCGFEHPSEVQH). One can recognise a Helicase ATP-binding domain in the interval 82–255 (IPQAILGMDV…KKFMQDPMEI (174 aa)). 95-102 (AKSGMGKT) is a binding site for ATP. A DEAD box motif is present at residues 202 to 205 (DECD). The Helicase C-terminal domain occupies 283 to 428 (KLNDLLDALD…ELPEQIDTST (146 aa)).

The protein belongs to the DEAD box helicase family. DECD subfamily. Homodimer and heterodimer with AIP2. Interacts with API5.

It is found in the nucleus. It carries out the reaction ATP + H2O = ADP + phosphate + H(+). In terms of biological role, ATP-binding RNA helicase involved in pre-mRNA splicing. Required for the export of mRNA out of the nucleus. Required for tapetal programmed cell death (PCD) and degeneration during anther development. Forms dimer with AIP2 and binds the promoter region of the cysteine protease CP1. Can complement the yeast RNA helicase SUB2. Plants silencing AIP1 and AIP2 are male sterile. This is DEAD-box ATP-dependent RNA helicase 56 from Oryza sativa subsp. japonica (Rice).